A 293-amino-acid chain; its full sequence is MYEEMDSLIEKASILIEALPYIQKLYGKTVVIKYGGNAMINEKLKNWVMEDITLLKYIGVNPIVVHGGGPDINSVLKKLNVESQFVNGLRVTDMQTMEVAQMVLVGKTNKELVSMLNQKGGKAIGICGIDGNLIQARKHYEYVNGEKIDLGYVGEVVSINAKVLEMLAKDEYIPVVAPIGVGEDGTSYNINADTVAAEIAKAIKAEKLMFMTDVEGLKYDKNSKKIISAISADEVLKMIEEGKIDGGMIPKVLGCIDALKHGVNRTHILDGRIPHCILLEIFTDKGIGTMIHL.

Substrate is bound by residues 68–69 (GG), arginine 90, and asparagine 189.

Belongs to the acetylglutamate kinase family. ArgB subfamily.

It is found in the cytoplasm. It catalyses the reaction N-acetyl-L-glutamate + ATP = N-acetyl-L-glutamyl 5-phosphate + ADP. It functions in the pathway amino-acid biosynthesis; L-arginine biosynthesis; N(2)-acetyl-L-ornithine from L-glutamate: step 2/4. Functionally, catalyzes the ATP-dependent phosphorylation of N-acetyl-L-glutamate. In Caldicellulosiruptor bescii (strain ATCC BAA-1888 / DSM 6725 / KCTC 15123 / Z-1320) (Anaerocellum thermophilum), this protein is Acetylglutamate kinase.